The following is a 464-amino-acid chain: Glutamate--tRNA ligase (464 aa).

A 'HIGH' region motif is present at residues 9–19 (PSPTGYLHIGG). The 'KMSKS' region motif lies at 242–246 (KISKR). Residue Lys-245 participates in ATP binding.

It belongs to the class-I aminoacyl-tRNA synthetase family. Glutamate--tRNA ligase type 1 subfamily. As to quaternary structure, monomer.

Its subcellular location is the cytoplasm. It carries out the reaction tRNA(Glu) + L-glutamate + ATP = L-glutamyl-tRNA(Glu) + AMP + diphosphate. Its function is as follows. Catalyzes the attachment of glutamate to tRNA(Glu) in a two-step reaction: glutamate is first activated by ATP to form Glu-AMP and then transferred to the acceptor end of tRNA(Glu). The chain is Glutamate--tRNA ligase from Neisseria meningitidis serogroup C (strain 053442).